Here is a 137-residue protein sequence, read N- to C-terminus: Holo-[acyl-carrier-protein] synthase (137 aa).

2 residues coordinate Mg(2+): Asp8 and Glu58.

This sequence belongs to the P-Pant transferase superfamily. AcpS family. The cofactor is Mg(2+).

It localises to the cytoplasm. The catalysed reaction is apo-[ACP] + CoA = holo-[ACP] + adenosine 3',5'-bisphosphate + H(+). Its function is as follows. Transfers the 4'-phosphopantetheine moiety from coenzyme A to a Ser of acyl-carrier-protein. This is Holo-[acyl-carrier-protein] synthase from Lactobacillus delbrueckii subsp. bulgaricus (strain ATCC BAA-365 / Lb-18).